We begin with the raw amino-acid sequence, 116 residues long: Iron-sulfur cluster insertion protein ErpA (116 aa).

Iron-sulfur cluster is bound by residues cysteine 44, cysteine 108, and cysteine 110.

The protein belongs to the HesB/IscA family. In terms of assembly, homodimer. It depends on iron-sulfur cluster as a cofactor.

Functionally, required for insertion of 4Fe-4S clusters for at least IspG. In Pseudomonas syringae pv. syringae (strain B728a), this protein is Iron-sulfur cluster insertion protein ErpA.